The sequence spans 240 residues: Mitochondrial transcription rescue factor 1 (240 aa).

A mitochondrion-targeting transit peptide spans 1 to 84 (MAMASVKLLA…ECIFPFSVRL (84 aa)). The tract at residues 95 to 127 (KKSLQKVDEEDSDEESHHDEMSEQEEELEDDPT) is disordered. Serine 106 and serine 116 each carry phosphoserine. Positions 116–126 (SEQEEELEDDP) are enriched in acidic residues. One can recognise an S4 RNA-binding domain in the interval 142–217 (FRYDVVLKTG…LKKVFEEKTE (76 aa)).

Monomer. Interacts with POLRMT. Interacts (via S4 domain) with MTRFR (via C-terminus). Associates with mitoribosomal S39 large subunit, peptidyl tRNA and nascent chain.

It is found in the mitochondrion matrix. Functionally, mitochondrial RNA-binding protein involved in mitochondrial transcription regulation. Functions as a protective factor to maintain proper mitochondrial RNA level during stress. Acts at the transcription level and its protective function depends on its RNA binding ability. Part of a mitoribosome-associated quality control pathway that prevents aberrant translation by responding to interruptions during elongation. As heterodimer with MTRF, ejects the unfinished nascent chain and peptidyl transfer RNA (tRNA), respectively, from stalled ribosomes. Recruitment of mitoribosome biogenesis factors to these quality control intermediates suggests additional roles for MTRES1 and MTRF during mitoribosome rescue. The protein is Mitochondrial transcription rescue factor 1 of Homo sapiens (Human).